A 72-amino-acid chain; its full sequence is Large ribosomal subunit protein uL29 (72 aa).

This sequence belongs to the universal ribosomal protein uL29 family.

This chain is Large ribosomal subunit protein uL29, found in Chlamydia abortus (strain DSM 27085 / S26/3) (Chlamydophila abortus).